Reading from the N-terminus, the 160-residue chain is V-type proton ATPase subunit c (160 aa).

At 1–8 (MTELCPVY) the chain is on the vacuolar side. The chain crosses the membrane as a helical span at residues 9-31 (APFFGAIGCASAIIFTSLGAAYG). The Cytoplasmic segment spans residues 32–53 (TAKSGVGICATCVLRPDLLFKN). Residues 54–74 (IVPVIMAGIIAIYGLVVSVLV) form a helical membrane-spanning segment. At 75 to 90 (CYSLGQKQALYTGFIQ) the chain is on the vacuolar side. Residues 91 to 112 (LGAGLSVGLSGLAAGFAIGIVG) form a helical membrane-spanning segment. The Cytoplasmic portion of the chain corresponds to 113 to 124 (DAGVRGSSQQPR). Residues 125–150 (LFVGMILILIFAEVLGLYGLIVALLL) traverse the membrane as a helical segment. Over 151 to 160 (NSRATQDVVC) the chain is Vacuolar.

Belongs to the V-ATPase proteolipid subunit family. V-ATPase is a heteromultimeric enzyme composed of a peripheral catalytic V1 complex (components A to H) attached to an integral membrane V0 proton pore complex (components: a, c, c', c'', d, e, f and VOA1). The decameric c-ring forms the proton-conducting pore, and is composed of eight proteolipid subunits c, one subunit c' and one subunit c''.

The protein resides in the vacuole membrane. Its function is as follows. Proton-conducting pore forming subunit of the V0 complex of vacuolar(H+)-ATPase (V-ATPase), a multisubunit enzyme composed of a peripheral complex (V1) that hydrolyzes ATP and a membrane integral complex (V0) that translocates protons. V-ATPase is responsible for acidifying and maintaining the pH of intracellular compartments. This chain is V-type proton ATPase subunit c (VMA3), found in Saccharomyces cerevisiae (strain ATCC 204508 / S288c) (Baker's yeast).